The sequence spans 165 residues: 3-isopropylmalate dehydratase small subunit (165 aa).

Belongs to the LeuD family. LeuD type 2 subfamily. In terms of assembly, heterodimer of LeuC and LeuD.

The catalysed reaction is (2R,3S)-3-isopropylmalate = (2S)-2-isopropylmalate. It participates in amino-acid biosynthesis; L-leucine biosynthesis; L-leucine from 3-methyl-2-oxobutanoate: step 2/4. Its function is as follows. Catalyzes the isomerization between 2-isopropylmalate and 3-isopropylmalate, via the formation of 2-isopropylmaleate. The polypeptide is 3-isopropylmalate dehydratase small subunit (Saccharolobus islandicus (strain Y.N.15.51 / Yellowstone #2) (Sulfolobus islandicus)).